The following is a 1097-amino-acid chain: FHIP family protein GK23746 (1097 aa).

Residues 1–21 show a composition bias toward polar residues; sequence MSWLRSSPLRQSLTRTTSSGN. The interval 1 to 25 is disordered; sequence MSWLRSSPLRQSLTRTTSSGNGIRP. Serine 491 carries the post-translational modification Phosphoserine. Disordered regions lie at residues 639–684, 820–856, and 932–1042; these read DVSA…SGRR, NENSPLHQQQSLQHPHHLQPLPAPQQTGAGAQQRSAY, and NNQQ…SEPV. Positions 641–654 are enriched in low complexity; that stretch reads SASSGNGTGSVVVG. Serine 823 is modified (phosphoserine). 2 stretches are compositionally biased toward low complexity: residues 824–852 and 932–948; these read PLHQQQSLQHPHHLQPLPAPQQTGAGAQQ and NNQQSSNQTHLNSSSSS. Residues 949–962 are compositionally biased toward polar residues; sequence AVTTCETSLSTQPH. Positions 973 to 985 are enriched in low complexity; it reads TTSSTISTSSGTT. The segment covering 986–995 has biased composition (gly residues); the sequence is AGSGGGGGSG. Low complexity-rich tracts occupy residues 996 to 1006 and 1013 to 1022; these read SNSSFSIGGST and SNNTTNSSST.

It belongs to the FHIP family.

This is FHIP family protein GK23746 from Drosophila willistoni (Fruit fly).